A 402-amino-acid polypeptide reads, in one-letter code: 1-deoxy-D-xylulose 5-phosphate reductoisomerase (402 aa).

Residues Thr27, Gly28, Ser29, Ile30, Gly53, Lys54, Asn55, and Asn140 each coordinate NADPH. Residue Lys141 participates in 1-deoxy-D-xylulose 5-phosphate binding. NADPH is bound at residue Glu142. Mn(2+) is bound at residue Asp166. Positions 167, 168, 192, and 215 each coordinate 1-deoxy-D-xylulose 5-phosphate. Glu168 contributes to the Mn(2+) binding site. Gly221 provides a ligand contact to NADPH. Positions 228, 233, 234, and 237 each coordinate 1-deoxy-D-xylulose 5-phosphate. Glu237 provides a ligand contact to Mn(2+).

The protein belongs to the DXR family. The cofactor is Mg(2+). Requires Mn(2+) as cofactor.

It catalyses the reaction 2-C-methyl-D-erythritol 4-phosphate + NADP(+) = 1-deoxy-D-xylulose 5-phosphate + NADPH + H(+). The protein operates within isoprenoid biosynthesis; isopentenyl diphosphate biosynthesis via DXP pathway; isopentenyl diphosphate from 1-deoxy-D-xylulose 5-phosphate: step 1/6. Its function is as follows. Catalyzes the NADPH-dependent rearrangement and reduction of 1-deoxy-D-xylulose-5-phosphate (DXP) to 2-C-methyl-D-erythritol 4-phosphate (MEP). In Lawsonia intracellularis (strain PHE/MN1-00), this protein is 1-deoxy-D-xylulose 5-phosphate reductoisomerase.